The chain runs to 487 residues: Aspartyl/glutamyl-tRNA(Asn/Gln) amidotransferase subunit B (487 aa).

Belongs to the GatB/GatE family. GatB subfamily. Heterotrimer of A, B and C subunits.

It carries out the reaction L-glutamyl-tRNA(Gln) + L-glutamine + ATP + H2O = L-glutaminyl-tRNA(Gln) + L-glutamate + ADP + phosphate + H(+). It catalyses the reaction L-aspartyl-tRNA(Asn) + L-glutamine + ATP + H2O = L-asparaginyl-tRNA(Asn) + L-glutamate + ADP + phosphate + 2 H(+). Functionally, allows the formation of correctly charged Asn-tRNA(Asn) or Gln-tRNA(Gln) through the transamidation of misacylated Asp-tRNA(Asn) or Glu-tRNA(Gln) in organisms which lack either or both of asparaginyl-tRNA or glutaminyl-tRNA synthetases. The reaction takes place in the presence of glutamine and ATP through an activated phospho-Asp-tRNA(Asn) or phospho-Glu-tRNA(Gln). This is Aspartyl/glutamyl-tRNA(Asn/Gln) amidotransferase subunit B from Leptospira biflexa serovar Patoc (strain Patoc 1 / Ames).